Here is a 616-residue protein sequence, read N- to C-terminus: Cytochrome c oxidase subunit 1 (616 aa).

Residues 28–48 traverse the membrane as a helical segment; sequence HLYLISGGFFFLLGGLEALFI. H72 provides a ligand contact to Fe(II)-heme a. Helical transmembrane passes span 75–95, 102–122, 158–178, 198–218, 243–263, and 275–295; these read TMIF…VVPL, VAFP…GLFL, GLQI…VTII, FVTS…LIFM, LFWV…FGIF, and LFGY…GFMV. Cu cation-binding residues include H249 and Y253. The 1'-histidyl-3'-tyrosine (His-Tyr) cross-link spans 249–253; the sequence is HPEVY. Cu cation is bound by residues H298 and H299. Transmembrane regions (helical) follow at residues 303-323, 349-369, 380-400, 420-440, 463-483, 553-573, and 577-597; these read VGMG…IAVP, AVAF…LASA, FVVA…LLAG, ITFW…HFLG, ISTI…INIV, SSFL…GFTY, and AGWG…SMFL. H384 contacts Fe(II)-heme o. H384 contacts heme a3. Residue H386 coordinates Fe(II)-heme a.

It belongs to the heme-copper respiratory oxidase family. Requires Cu(2+) as cofactor. Heme serves as cofactor.

It is found in the cell membrane. The enzyme catalyses 4 Fe(II)-[cytochrome c] + O2 + 8 H(+)(in) = 4 Fe(III)-[cytochrome c] + 2 H2O + 4 H(+)(out). It functions in the pathway energy metabolism; oxidative phosphorylation. Cytochrome c oxidase is the component of the respiratory chain that catalyzes the reduction of oxygen to water. Subunits 1-3 form the functional core of the enzyme complex. Co I is the catalytic subunit of the enzyme. Electrons originating in cytochrome c are transferred via the copper A center of subunit 2 and heme a of subunit 1 to the bimetallic center formed by heme a3 and copper B. This cytochrome c oxidase shows proton pump activity across the membrane in addition to the electron transfer. The chain is Cytochrome c oxidase subunit 1 (ctaD) from Bacillus sp. (strain PS3).